The primary structure comprises 71 residues: Movement protein TGBp3 (71 aa).

The Lumenal portion of the chain corresponds to Met1–Asp4. Residues Ser5–Val27 traverse the membrane as a helical segment. Topologically, residues Ser28–Glu71 are cytoplasmic.

This sequence belongs to the Tymovirales TGBp3 protein family.

The protein resides in the host endoplasmic reticulum membrane. Its function is as follows. Plays a role in viral cell-to-cell propagation, by facilitating genome transport to neighboring plant cells through plasmosdesmata. May induce the formation of granular vesicles derived from the Endoplasmic reticulum, which align on actin filaments. This Populus balsamifera (Balsam poplar) protein is Movement protein TGBp3.